Here is a 104-residue protein sequence, read N- to C-terminus: Turripeptide OL55 (104 aa).

In terms of processing, contains 8 disulfide bonds. In terms of tissue distribution, expressed by the venom duct.

It localises to the secreted. Its function is as follows. Acts as a neurotoxin by inhibiting an ion channel. This chain is Turripeptide OL55, found in Iotyrris olangoensis (Sea snail).